Consider the following 331-residue polypeptide: uncharacterized protein (331 aa).

Pentapeptide repeat domains follow at residues 50–89 (ENLQ…RLGH), 90–129 (CQMN…NFKG), 140–179 (ANLR…NLQE), 185–224 (ANLR…KLTG), and 230–269 (TNLS…NLTQ).

This is an uncharacterized protein from Synechocystis sp. (strain ATCC 27184 / PCC 6803 / Kazusa).